The primary structure comprises 134 residues: Putative protein KRIP1 (134 aa).

The segment at Met-1–Leu-134 is disordered. Composition is skewed to polar residues over residues Thr-9–Phe-24, Ser-43–Ser-55, and Cys-64–Asn-79. The segment covering Pro-119 to Ala-128 has biased composition (pro residues).

In terms of tissue distribution, abundant expression is found in prostate, restricted to cells of epithelial origin in normal and diseased glands. Very low expression is detected in pancreas and ovary.

It localises to the cytoplasm. Its subcellular location is the nucleus. The polypeptide is Putative protein KRIP1 (KLKP1) (Homo sapiens (Human)).